We begin with the raw amino-acid sequence, 937 residues long: FNIP repeat-containing protein DDB_G0271996 (937 aa).

The segment covering 1–12 has biased composition (polar residues); the sequence is MQQPISIQQPVV. The interval 1–60 is disordered; the sequence is MQQPISIQQPVVNNINNSPNNQANINNNTTNNTNNNNNNNNTTNNIANNNNSNNINNNNE. A compositionally biased stretch (low complexity) spans 13-60; sequence NNINNSPNNQANINNNTTNNTNNNNNNNNTTNNIANNNNSNNINNNNE. FNIP repeat units follow at residues 307–350, 354–394, 396–439, and 598–640; these read FNQP…LGQR, PIPI…TLDN, FNQP…FHQN, and YNHQ…RVKS. Positions 677–769 form a coiled coil; the sequence is VEQQAQYAQQ…EEEDTNNHQH (93 aa). Over residues 719 to 729 the composition is skewed to low complexity; that stretch reads KQQQQQQQDNE. Disordered regions lie at residues 719-767, 794-823, and 910-937; these read KQQQ…TNNH, SNNS…EEED, and QNQN…NVKK. Positions 751 to 763 are enriched in acidic residues; the sequence is LEEEQENEEEEED. Low complexity-rich tracts occupy residues 794–814 and 910–929; these read SNNS…NNNS and QNQN…NNNN. The stretch at 902-937 forms a coiled coil; the sequence is ICNNINQNQNQNNNNYNNNNNNNNNNNNNKKKNVKK.

This chain is FNIP repeat-containing protein DDB_G0271996, found in Dictyostelium discoideum (Social amoeba).